Reading from the N-terminus, the 143-residue chain is FAD synthase (143 aa).

Residues 10–11 (TF), 15–18 (HPGH), and Asp93 each bind ATP.

This sequence belongs to the archaeal FAD synthase family. As to quaternary structure, homodimer. A divalent metal cation is required as a cofactor.

The enzyme catalyses FMN + ATP + H(+) = FAD + diphosphate. The protein operates within cofactor biosynthesis; FAD biosynthesis; FAD from FMN: step 1/1. Catalyzes the transfer of the AMP portion of ATP to flavin mononucleotide (FMN) to produce flavin adenine dinucleotide (FAD) coenzyme. This chain is FAD synthase, found in Haloterrigena turkmenica (strain ATCC 51198 / DSM 5511 / JCM 9101 / NCIMB 13204 / VKM B-1734 / 4k) (Halococcus turkmenicus).